The chain runs to 313 residues: UPF0761 membrane protein VS_0126 (313 aa).

6 consecutive transmembrane segments (helical) span residues 41–61, 104–124, 139–159, 185–205, 217–237, and 249–269; these read YLAY…LSIL, MTAV…SNID, AVLS…LIGA, VIRK…YLLV, AGSL…AAYI, and ALAA…IVLV. The segment covering 281–290 has biased composition (polar residues); it reads EQWSDSQEMV. Positions 281 to 313 are disordered; sequence EQWSDSQEMVHSSDKDKITEQGNNSDSTDPESK.

Belongs to the UPF0761 family.

The protein localises to the cell inner membrane. This chain is UPF0761 membrane protein VS_0126, found in Vibrio atlanticus (strain LGP32) (Vibrio splendidus (strain Mel32)).